A 593-amino-acid polypeptide reads, in one-letter code: Aspartate--tRNA(Asp/Asn) ligase (593 aa).

Glu173 is an L-aspartate binding site. The tract at residues 197-200 (QLFK) is aspartate. L-aspartate is bound at residue Arg219. ATP contacts are provided by residues 219-221 (RDE) and Gln228. Position 451 (His451) interacts with L-aspartate. Glu485 contributes to the ATP binding site. Residue Arg492 coordinates L-aspartate. ATP is bound at residue 537–540 (GIDR).

The protein belongs to the class-II aminoacyl-tRNA synthetase family. Type 1 subfamily. Homodimer.

It localises to the cytoplasm. It catalyses the reaction tRNA(Asx) + L-aspartate + ATP = L-aspartyl-tRNA(Asx) + AMP + diphosphate. Its function is as follows. Aspartyl-tRNA synthetase with relaxed tRNA specificity since it is able to aspartylate not only its cognate tRNA(Asp) but also tRNA(Asn). Reaction proceeds in two steps: L-aspartate is first activated by ATP to form Asp-AMP and then transferred to the acceptor end of tRNA(Asp/Asn). The sequence is that of Aspartate--tRNA(Asp/Asn) ligase from Legionella pneumophila (strain Corby).